A 37-amino-acid polypeptide reads, in one-letter code: MTVEGLTILRSPTFLTIIVLLMIVFGIAIVALLTQYV.

A helical membrane pass occupies residues 13–33; sequence TFLTIIVLLMIVFGIAIVALL.

Its subcellular location is the host membrane. This is an uncharacterized protein from Acidianus convivator (ABV).